Here is a 706-residue protein sequence, read N- to C-terminus: Ribosomal RNA large subunit methyltransferase K/L (706 aa).

The 112-residue stretch at 43-154 folds into the THUMP domain; it reads LMYQSLLWSR…RDMASVALDL (112 aa).

Belongs to the methyltransferase superfamily. RlmKL family.

It localises to the cytoplasm. The enzyme catalyses guanosine(2445) in 23S rRNA + S-adenosyl-L-methionine = N(2)-methylguanosine(2445) in 23S rRNA + S-adenosyl-L-homocysteine + H(+). The catalysed reaction is guanosine(2069) in 23S rRNA + S-adenosyl-L-methionine = N(2)-methylguanosine(2069) in 23S rRNA + S-adenosyl-L-homocysteine + H(+). Functionally, specifically methylates the guanine in position 2445 (m2G2445) and the guanine in position 2069 (m7G2069) of 23S rRNA. The protein is Ribosomal RNA large subunit methyltransferase K/L of Yersinia pestis bv. Antiqua (strain Antiqua).